Here is a 394-residue protein sequence, read N- to C-terminus: Elongation factor Tu (394 aa).

The region spanning 10–204 (KPHVNIGTIG…AVDSYIPQPV (195 aa)) is the tr-type G domain. The segment at 19-26 (GHVDHGKT) is G1. 19–26 (GHVDHGKT) contacts GTP. Threonine 26 lines the Mg(2+) pocket. A G2 region spans residues 60-64 (GITIS). Residues 81-84 (DCPG) are G3. Residues 81–85 (DCPGH) and 136–139 (NKVD) each bind GTP. The segment at 136–139 (NKVD) is G4. Residues 174–176 (SAL) form a G5 region.

It belongs to the TRAFAC class translation factor GTPase superfamily. Classic translation factor GTPase family. EF-Tu/EF-1A subfamily. In terms of assembly, monomer.

Its subcellular location is the cytoplasm. It catalyses the reaction GTP + H2O = GDP + phosphate + H(+). Functionally, GTP hydrolase that promotes the GTP-dependent binding of aminoacyl-tRNA to the A-site of ribosomes during protein biosynthesis. The chain is Elongation factor Tu from Rickettsia parkeri.